The chain runs to 168 residues: Peptide methionine sulfoxide reductase MsrA 2 (168 aa).

The active site involves C11.

Belongs to the MsrA Met sulfoxide reductase family.

The catalysed reaction is L-methionyl-[protein] + [thioredoxin]-disulfide + H2O = L-methionyl-(S)-S-oxide-[protein] + [thioredoxin]-dithiol. The enzyme catalyses [thioredoxin]-disulfide + L-methionine + H2O = L-methionine (S)-S-oxide + [thioredoxin]-dithiol. Has an important function as a repair enzyme for proteins that have been inactivated by oxidation. Catalyzes the reversible oxidation-reduction of methionine sulfoxide in proteins to methionine. This Rhodopirellula baltica (strain DSM 10527 / NCIMB 13988 / SH1) protein is Peptide methionine sulfoxide reductase MsrA 2.